Consider the following 189-residue polypeptide: Probable nicotinate-nucleotide adenylyltransferase (189 aa).

It belongs to the NadD family.

The catalysed reaction is nicotinate beta-D-ribonucleotide + ATP + H(+) = deamido-NAD(+) + diphosphate. Its pathway is cofactor biosynthesis; NAD(+) biosynthesis; deamido-NAD(+) from nicotinate D-ribonucleotide: step 1/1. Functionally, catalyzes the reversible adenylation of nicotinate mononucleotide (NaMN) to nicotinic acid adenine dinucleotide (NaAD). The protein is Probable nicotinate-nucleotide adenylyltransferase of Bacillus cytotoxicus (strain DSM 22905 / CIP 110041 / 391-98 / NVH 391-98).